Consider the following 60-residue polypeptide: Large ribosomal subunit protein uL30 (60 aa).

It belongs to the universal ribosomal protein uL30 family. Part of the 50S ribosomal subunit.

The protein is Large ribosomal subunit protein uL30 of Dehalococcoides mccartyi (strain ATCC BAA-2266 / KCTC 15142 / 195) (Dehalococcoides ethenogenes (strain 195)).